Reading from the N-terminus, the 284-residue chain is Four and a half LIM domains protein 5 (284 aa).

The C4-type zinc-finger motif lies at 8-32 (CQYCMASLLGKKYVLKDDNPYCVSC). LIM zinc-binding domains are found at residues 39–100 (NYCE…ECSS), 101–160 (KCFH…KEFA), 161–220 (HYCS…LYAK), and 223–283 (AACT…VDTD).

Interacts with CREM (via the third LIM domain). Interacts (via second LIM domain) with SPAG8.

The protein resides in the nucleus. Its function is as follows. May be involved in the regulation of spermatogenesis. Stimulates CREM transcriptional activity in a phosphorylation-independent manner. The protein is Four and a half LIM domains protein 5 (FHL5) of Bos taurus (Bovine).